A 406-amino-acid chain; its full sequence is Probable tRNA sulfurtransferase (406 aa).

Positions 60-166 (EPVMERLKQV…LNGIYLTSAK (107 aa)) constitute a THUMP domain. ATP contacts are provided by residues 184-185 (ML), 209-210 (HF), Arg266, Gly288, and Gln297.

It belongs to the ThiI family.

The protein localises to the cytoplasm. It carries out the reaction [ThiI sulfur-carrier protein]-S-sulfanyl-L-cysteine + a uridine in tRNA + 2 reduced [2Fe-2S]-[ferredoxin] + ATP + H(+) = [ThiI sulfur-carrier protein]-L-cysteine + a 4-thiouridine in tRNA + 2 oxidized [2Fe-2S]-[ferredoxin] + AMP + diphosphate. The enzyme catalyses [ThiS sulfur-carrier protein]-C-terminal Gly-Gly-AMP + S-sulfanyl-L-cysteinyl-[cysteine desulfurase] + AH2 = [ThiS sulfur-carrier protein]-C-terminal-Gly-aminoethanethioate + L-cysteinyl-[cysteine desulfurase] + A + AMP + 2 H(+). Its pathway is cofactor biosynthesis; thiamine diphosphate biosynthesis. Catalyzes the ATP-dependent transfer of a sulfur to tRNA to produce 4-thiouridine in position 8 of tRNAs, which functions as a near-UV photosensor. Also catalyzes the transfer of sulfur to the sulfur carrier protein ThiS, forming ThiS-thiocarboxylate. This is a step in the synthesis of thiazole, in the thiamine biosynthesis pathway. The sulfur is donated as persulfide by IscS. This chain is Probable tRNA sulfurtransferase, found in Limosilactobacillus fermentum (strain NBRC 3956 / LMG 18251) (Lactobacillus fermentum).